A 449-amino-acid chain; its full sequence is MSHITFDYSKVLESFAGQHEIDFLQGQVTEADKLLREGTGPGSDFLGWLDLPENYDKEEFARILTAAEKIKADSEVLVVIGIGGSYLGAKAAIDFLNHHFANLQTAKERKAPQILYAGNSISSTYLADLVEYVQDKEFSVNVISKSGTTTEPAIAFRVFKELLVKKYGQEEANKRIYATTDKVKGAVKVEADANNWETFVVPDNVGGRFSVLTAVGLLPIAASGADITALMEGANAARKDLSSDKISENIAYQYAAVRNVLYRKGYITEILANYEPSLQYLGEWWKQLAGESEGKDQKGIYPTSANFSTDLHSLGQFIQEGYRNLFETVIRVDNPRKNVIIPELAEDLDGLGYLQGKDVDFVNKKATDGVLLAHTDGGVPNMFVTLPAQDEFTLGYTIYFFELAIAVSGYMNAVNPFDQPGVEAYKRNMFALLGKPGFEALSAELNARL.

E291 serves as the catalytic Proton donor. Active-site residues include H312 and K426.

The protein belongs to the GPI family.

Its subcellular location is the cytoplasm. It catalyses the reaction alpha-D-glucose 6-phosphate = beta-D-fructose 6-phosphate. The protein operates within carbohydrate biosynthesis; gluconeogenesis. It participates in carbohydrate degradation; glycolysis; D-glyceraldehyde 3-phosphate and glycerone phosphate from D-glucose: step 2/4. Its function is as follows. Catalyzes the reversible isomerization of glucose-6-phosphate to fructose-6-phosphate. This is Glucose-6-phosphate isomerase from Streptococcus pyogenes serotype M6 (strain ATCC BAA-946 / MGAS10394).